Reading from the N-terminus, the 282-residue chain is ATP synthase subunit a (282 aa).

The next 5 membrane-spanning stretches (helical) occupy residues 45–65, 106–126, 160–179, 232–252, and 253–273; these read AIHV…LWLF, IAPL…MDLI, INAT…FYSI, LIFI…SVPW, and AIFH…LTIV.

Belongs to the ATPase A chain family. F-type ATPases have 2 components, CF(1) - the catalytic core - and CF(0) - the membrane proton channel. CF(1) has five subunits: alpha(3), beta(3), gamma(1), delta(1), epsilon(1). CF(0) has three main subunits: a(1), b(2) and c(9-12). The alpha and beta chains form an alternating ring which encloses part of the gamma chain. CF(1) is attached to CF(0) by a central stalk formed by the gamma and epsilon chains, while a peripheral stalk is formed by the delta and b chains.

The protein localises to the cell inner membrane. In terms of biological role, key component of the proton channel; it plays a direct role in the translocation of protons across the membrane. The chain is ATP synthase subunit a from Marinomonas sp. (strain MWYL1).